A 940-amino-acid polypeptide reads, in one-letter code: PTS system glucose-specific EIICBA component (940 aa).

A PTS EIIC type-1; first part domain is found at 1 to 284; the sequence is MQIKAQDTGQ…YAPLWYTSAG (284 aa). The next 5 membrane-spanning stretches (helical) occupy residues 43 to 63, 83 to 103, 112 to 132, 175 to 195, and 209 to 229; these read LMIP…GDAI, GGDV…AITF, FSAF…ILPF, VFGG…FYAI, and FVPI…LMIW. The interval 285-478 is unknown; that stretch reads GSLQEIVNQQ…VNSFRVAVES (194 aa). Residues 479 to 630 enclose the PTS EIIC type-1; second part domain; it reads LNPAQYSQGK…FNLATPGRGG (152 aa). 5 helical membrane-spanning segments follow: residues 487–507, 515–535, 537–557, 564–584, and 598–618; these read GKFP…ILAA, AASI…TEPF, FTFL…LAAV, ILGA…ILYG, and LVPI…YFLI. Positions 661–743 constitute a PTS EIIB type-1 domain; that stretch reads QIEAGILLQA…QDIIQGKVNW (83 aa). Residue Cys-683 is the Phosphocysteine intermediate; for EIIB activity of the active site. The PTS EIIA type-1 domain maps to 794–907; sequence DETFKQKLVG…NPITPFVVMK (114 aa). His-847 acts as the Tele-phosphohistidine intermediate; for EIIA activity in catalysis.

The protein resides in the cell membrane. It catalyses the reaction N(pros)-phospho-L-histidyl-[protein] + D-glucose(out) = D-glucose 6-phosphate(in) + L-histidyl-[protein]. Its function is as follows. The phosphoenolpyruvate-dependent sugar phosphotransferase system (sugar PTS), a major carbohydrate active transport system, catalyzes the phosphorylation of incoming sugar substrates concomitantly with their translocation across the cell membrane. This system is involved in glucose transport. In Mycoplasma pneumoniae (strain ATCC 29342 / M129 / Subtype 1) (Mycoplasmoides pneumoniae), this protein is PTS system glucose-specific EIICBA component (ptsG).